Reading from the N-terminus, the 677-residue chain is DNA ligase (677 aa).

Residues 43 to 47, 92 to 93, and Glu122 each bind NAD(+); these read DHVYD and SM. Catalysis depends on Lys124, which acts as the N6-AMP-lysine intermediate. Arg145, Glu179, Lys295, and Lys319 together coordinate NAD(+). The Zn(2+) site is built by Cys413, Cys416, Cys431, and Cys436. The BRCT domain maps to 599 to 677; the sequence is TSDSYFNGKT…EADLDNYLAQ (79 aa).

It belongs to the NAD-dependent DNA ligase family. LigA subfamily. Mg(2+) is required as a cofactor. It depends on Mn(2+) as a cofactor.

The catalysed reaction is NAD(+) + (deoxyribonucleotide)n-3'-hydroxyl + 5'-phospho-(deoxyribonucleotide)m = (deoxyribonucleotide)n+m + AMP + beta-nicotinamide D-nucleotide.. DNA ligase that catalyzes the formation of phosphodiester linkages between 5'-phosphoryl and 3'-hydroxyl groups in double-stranded DNA using NAD as a coenzyme and as the energy source for the reaction. It is essential for DNA replication and repair of damaged DNA. This is DNA ligase from Latilactobacillus sakei subsp. sakei (strain 23K) (Lactobacillus sakei subsp. sakei).